Here is a 736-residue protein sequence, read N- to C-terminus: Glycogen [starch] synthase, muscle (736 aa).

Position 8 is a phosphoserine; by AMPK and PKA (Ser-8). Phosphoserine is present on Ser-11. Lys-39 is a binding site for UDP. Positions 205 and 211 each coordinate UDP-alpha-D-glucose. The alpha-D-glucose 6-phosphate site is built by His-291, Glu-292, Gln-294, His-297, and Lys-301. Residue Arg-331 participates in UDP binding. Arg-331 lines the UDP-alpha-D-glucose pocket. The residue at position 412 (Ser-412) is a Phosphoserine. His-501 serves as a coordination point for alpha-D-glucose 6-phosphate. UDP-alpha-D-glucose-binding residues include Glu-510, Trp-512, and Gly-513. Position 515 (Thr-515) interacts with UDP. Alpha-D-glucose 6-phosphate-binding residues include Arg-582 and Arg-586. Residues 631 to 736 (TQGYRYPRPA…PASSLGEERN (106 aa)) form a disordered region. The residue at position 641 (Ser-641) is a Phosphoserine; by DYRK2, GSK3-alpha, GSK3-beta and PASK. A phosphoserine; by GSK3-alpha and GSK3-beta mark is found at Ser-645 and Ser-649. At Ser-652 the chain carries Phosphoserine. Ser-653 carries the phosphoserine; by GSK3-alpha and GSK3-beta modification. Position 657 is a phosphoserine; by CK2 (Ser-657). Positions 658–681 (EDEEEPRDLPPDEDDERYDEDEEA) are enriched in acidic residues. Residues 682–695 (AKDRRNIRAPEWPR) show a composition bias toward basic and acidic residues. Residue Ser-698 is modified to Phosphoserine. Residue Thr-700 is modified to Phosphothreonine. Ser-709 carries the phosphoserine modification. Residues 714–727 (PSSSVSTPSEPLSP) show a composition bias toward low complexity. At Thr-720 the chain carries Phosphothreonine. Ser-726 and Ser-730 each carry phosphoserine.

It belongs to the glycosyltransferase 3 family. Part of the GYS1-GYG1 complex, a heterooctamer composed of a tetramer of GYS1 and 2 dimers of GYG1, where each GYS1 protomer binds to one GYG1 subunit (via GYG1 C-terminus); the GYS1 tetramer may dissociate from GYG1 dimers to continue glycogen polymerization on its own. In terms of processing, phosphorylation at Ser-8 by AMPK inactivates the enzyme activity. Primed phosphorylation at Ser-657 (site 5) by CSNK2A1 and CSNK2A2 is required for inhibitory phosphorylation at Ser-641 (site 3a), Ser-645 (site 3b), Ser-649 (site 3c) and Ser-653 (site 4) by GSK3A an GSK3B. Phosphorylated at Ser-641 by PASK, leading to inactivation; phosphorylation by PASK is inhibited by glycogen. Phosphorylated at Ser-641 by DYRK2, leading to inactivation. Dephosphorylation at Ser-641 and Ser-645 by PP1 activates the enzyme.

It carries out the reaction [(1-&gt;4)-alpha-D-glucosyl](n) + UDP-alpha-D-glucose = [(1-&gt;4)-alpha-D-glucosyl](n+1) + UDP + H(+). Its pathway is glycan biosynthesis; glycogen biosynthesis. Allosteric activation by glucose-6-phosphate. Phosphorylation reduces the activity towards UDP-glucose. When in the non-phosphorylated state, glycogen synthase does not require glucose-6-phosphate as an allosteric activator; when phosphorylated it does. In terms of biological role, glycogen synthase participates in the glycogen biosynthetic process along with glycogenin and glycogen branching enzyme. Extends the primer composed of a few glucose units formed by glycogenin by adding new glucose units to it. In this context, glycogen synthase transfers the glycosyl residue from UDP-Glc to the non-reducing end of alpha-1,4-glucan. The protein is Glycogen [starch] synthase, muscle (GYS1) of Bos taurus (Bovine).